A 551-amino-acid chain; its full sequence is uncharacterized protein (551 aa).

Disordered stretches follow at residues 66–111, 130–165, 180–229, and 277–303; these read GNNK…STNL, PEAT…EKSN, AFNP…LSNL, and AFTS…VPLS. S74 is modified (phosphoserine). Polar residues-rich tracts occupy residues 92 to 111 and 143 to 156; these read GFSN…STNL and VVNT…GTQE. Residues 182 to 193 show a composition bias toward low complexity; the sequence is NPSSVLPSNSSS. Positions 204 to 226 are enriched in polar residues; that stretch reads KETYQPNTFRRSPLKNDTGSVEL. Residues 290-299 show a composition bias toward low complexity; it reads TRPSSTRFPS.

This is an uncharacterized protein from Schizosaccharomyces pombe (strain 972 / ATCC 24843) (Fission yeast).